The chain runs to 544 residues: Methionine--tRNA ligase (544 aa).

Positions 10 to 20 match the 'HIGH' region motif; the sequence is PYANGSLHLGH. Zn(2+) is bound by residues C141, C144, C153, and C156. Residues 329–333 carry the 'KMSKS' region motif; the sequence is KLSTS. Position 332 (T332) interacts with ATP.

Belongs to the class-I aminoacyl-tRNA synthetase family. MetG type 1 subfamily. Monomer. Zn(2+) is required as a cofactor.

It is found in the cytoplasm. It carries out the reaction tRNA(Met) + L-methionine + ATP = L-methionyl-tRNA(Met) + AMP + diphosphate. Functionally, is required not only for elongation of protein synthesis but also for the initiation of all mRNA translation through initiator tRNA(fMet) aminoacylation. The polypeptide is Methionine--tRNA ligase (Bacillus cereus (strain B4264)).